Here is a 284-residue protein sequence, read N- to C-terminus: uncharacterized protein (284 aa).

The Cytoplasmic segment spans residues 1-8 (MLWKVSKM). Residues 9–25 (FLGGLVALTTISVATLY) traverse the membrane as a helical segment. The Extracellular portion of the chain corresponds to 26–80 (HYQNRLVYPSWAQGARNHVDTPDSRGIPYEKLTLITQDHIKLEAWDIKNENSTST). Residues 81 to 101 (VLILCPNAGNIGYFILIIDIF) traverse the membrane as a helical segment. The Cytoplasmic segment spans residues 102-284 (YRQFGMSVFI…RDFLIEKGFI (183 aa)).

To S.pombe bem46 and M.tuberculosis Rv2307c.

The protein localises to the mitochondrion membrane. This is an uncharacterized protein from Saccharomyces cerevisiae (strain ATCC 204508 / S288c) (Baker's yeast).